We begin with the raw amino-acid sequence, 125 residues long: Protein ApaG (125 aa).

Positions 1 to 125 (MINAPRVCVQ…FRLAIPSLIH (125 aa)) constitute an ApaG domain.

This is Protein ApaG from Pectobacterium atrosepticum (strain SCRI 1043 / ATCC BAA-672) (Erwinia carotovora subsp. atroseptica).